Here is a 1627-residue protein sequence, read N- to C-terminus: Type III effector DspE (1627 aa).

2 stretches are compositionally biased toward polar residues: residues 22-44 (AKTS…SLIQ) and 59-74 (GNGS…STTL). Disordered regions lie at residues 22–102 (AKTS…GPIQ) and 436–464 (QTQA…TPGW). 3 short sequence motifs (wxxxE) span residues 464–468 (WNLSD), 514–520 (WEASSVE), and 660–667 (WQNAANHD).

The protein belongs to the AvrE family.

It localises to the secreted. The protein localises to the host cell. Its function is as follows. Major virulence factor that may function as a water- and solute-permeable channel dedicated to creating osmotic/water potential perturbation and a water- and nutrient-rich apoplast in which bacteria multiply within the infected plant tissues. Functionally, required for plant cell death in N.benthamiana leaves and leaf cell death in S.tuberosum. Essential for pathogenicity. Does not suppress callose formation. This is Type III effector DspE from Pectobacterium carotovorum (Erwinia carotovora).